We begin with the raw amino-acid sequence, 250 residues long: Hydroxyethylthiazole kinase (250 aa).

Methionine 39 contributes to the substrate binding site. ATP-binding residues include arginine 114 and threonine 159. Residue glycine 186 participates in substrate binding.

Belongs to the Thz kinase family. Mg(2+) is required as a cofactor.

The catalysed reaction is 5-(2-hydroxyethyl)-4-methylthiazole + ATP = 4-methyl-5-(2-phosphooxyethyl)-thiazole + ADP + H(+). Its pathway is cofactor biosynthesis; thiamine diphosphate biosynthesis; 4-methyl-5-(2-phosphoethyl)-thiazole from 5-(2-hydroxyethyl)-4-methylthiazole: step 1/1. Functionally, catalyzes the phosphorylation of the hydroxyl group of 4-methyl-5-beta-hydroxyethylthiazole (THZ). The protein is Hydroxyethylthiazole kinase of Lactococcus lactis subsp. cremoris (strain MG1363).